A 399-amino-acid chain; its full sequence is MSGNRGVVYLGPGKVEVQNIPYPKMQDPQGRQIDHGVILRVVSTNICGSDQHMVRGRTTAPEGLVLGHEITGEVVEIGRGVETMKIGDLVSVPFNVACGHCRTCKEQHTGVCLTVNPARAGGAYGYVDMGGWVGGQAEYVLVPYADFNLLKLPNREAAMEKIRDLTCLSDILPTGYHGAVTAGVGPGSTVYIAGAGPVGLAAAASARLLGAAVVIVGDVNPTRLAHAKKQGFEIADLSKDTPLHEQIAALLGEPEVDCAVDAVGFEARGHGHSGSQQEAPATVLNSLMGITRVAGKIGIPGLYVTEDPGAVDAAAKHGALSIRFGLGWAKSHSFHTGQTPVMKYNRQLMQAIMWDRIKIADIVGVEVITLDDAPKGYGEFDAGVPKKFVIDPHNLFRAA.

Cys47 contributes to the Zn(2+) binding site. NAD(+) is bound by residues Gly48, Ser49, and His52. Residues His68, Cys98, Cys101, Cys104, Cys112, and Asp170 each coordinate Zn(2+). Positions 198, 218, 223, 263, 268, 300, 338, and 339 each coordinate NAD(+).

The protein belongs to the zinc-containing alcohol dehydrogenase family. In terms of assembly, homotetramer. It depends on Zn(2+) as a cofactor.

It carries out the reaction formaldehyde + NAD(+) + H2O = formate + NADH + 2 H(+). The catalysed reaction is acetaldehyde + NAD(+) + H2O = acetate + NADH + 2 H(+). Dehydrogenase that catalyzes the NAD(+)-dependent oxidation of formaldehyde and acetaldehyde. Shows no detectable activity against either aldehydes with longer carbon chains or ethanol. The chain is Glutathione-independent formaldehyde dehydrogenase from Pseudomonas aeruginosa (strain LESB58).